Consider the following 362-residue polypeptide: Phosphoserine aminotransferase (362 aa).

L-glutamate-binding residues include Ser-9 and Arg-42. Pyridoxal 5'-phosphate is bound by residues 76–77 (GR), Trp-102, Thr-153, Asp-174, and Gln-197. Residue Lys-198 is modified to N6-(pyridoxal phosphate)lysine. Pyridoxal 5'-phosphate is bound at residue 239–240 (NT).

The protein belongs to the class-V pyridoxal-phosphate-dependent aminotransferase family. SerC subfamily. Homodimer. It depends on pyridoxal 5'-phosphate as a cofactor.

It is found in the cytoplasm. The enzyme catalyses O-phospho-L-serine + 2-oxoglutarate = 3-phosphooxypyruvate + L-glutamate. It carries out the reaction 4-(phosphooxy)-L-threonine + 2-oxoglutarate = (R)-3-hydroxy-2-oxo-4-phosphooxybutanoate + L-glutamate. Its pathway is amino-acid biosynthesis; L-serine biosynthesis; L-serine from 3-phospho-D-glycerate: step 2/3. The protein operates within cofactor biosynthesis; pyridoxine 5'-phosphate biosynthesis; pyridoxine 5'-phosphate from D-erythrose 4-phosphate: step 3/5. Its function is as follows. Catalyzes the reversible conversion of 3-phosphohydroxypyruvate to phosphoserine and of 3-hydroxy-2-oxo-4-phosphonooxybutanoate to phosphohydroxythreonine. The sequence is that of Phosphoserine aminotransferase from Salmonella choleraesuis (strain SC-B67).